A 426-amino-acid polypeptide reads, in one-letter code: Serine protease HTRA2, mitochondrial (426 aa).

A compositionally biased stretch (low complexity) spans 31 to 58; the sequence is SSTCNSTNTDNGSHNTNYNSSNNNNNNN. Residues 31 to 59 are disordered; sequence SSTCNSTNTDNGSHNTNYNSSNNNNNNND. The helical transmembrane segment at 71 to 87 threads the bilayer; the sequence is FLVPFSLGALASSVVAG. The IAP-binding signature appears at 79-82; the sequence is ALAS. Positions 143–306 are serine protease; that stretch reads SNGSGFVIEQ…IPIDYVKLFL (164 aa). Residues His-161, Asp-193, and Ser-270 each act as charge relay system in the active site. Positions 329–414 constitute a PDZ domain; sequence MGITMLTLTP…DLDMVILRGV (86 aa).

It belongs to the peptidase S1C family. In terms of assembly, interacts with th/DIAP1 (via BIR 2 domain).

It is found in the mitochondrion intermembrane space. Its subcellular location is the mitochondrion membrane. The enzyme catalyses Cleavage of non-polar aliphatic amino-acids at the P1 position, with a preference for Val, Ile and Met. At the P2 and P3 positions, Arg is selected most strongly with a secondary preference for other hydrophilic residues.. In terms of biological role, serine protease that shows proteolytic activity against a non-specific substrate beta-casein. Promotes or induces cell death either by direct binding to and inhibition of BIRC proteins (also called inhibitor of apoptosis proteins, IAPs), leading to an increase in caspase activity, or by a BIRC inhibition-independent, caspase-independent and serine protease activity-dependent mechanism. Can antagonize antiapoptotic activity of th/Diap1 by directly inducing the degradation of th/Diap1. The sequence is that of Serine protease HTRA2, mitochondrial from Drosophila grimshawi (Hawaiian fruit fly).